The chain runs to 66 residues: ATP synthase F(0) complex subunit 8 (66 aa).

The chain crosses the membrane as a helical span at residues threonine 8 to phenylalanine 24. The residue at position 54 (lysine 54) is an N6-acetyllysine; alternate. The residue at position 54 (lysine 54) is an N6-succinyllysine; alternate. Lysine 57 bears the N6-acetyllysine mark.

Belongs to the ATPase protein 8 family. Component of the ATP synthase complex composed at least of ATP5F1A/subunit alpha, ATP5F1B/subunit beta, ATP5MC1/subunit c (homooctomer), MT-ATP6/subunit a, MT-ATP8/subunit 8, ATP5ME/subunit e, ATP5MF/subunit f, ATP5MG/subunit g, ATP5MK/subunit k, ATP5MJ/subunit j, ATP5F1C/subunit gamma, ATP5F1D/subunit delta, ATP5F1E/subunit epsilon, ATP5PF/subunit F6, ATP5PB/subunit b, ATP5PD/subunit d, ATP5PO/subunit OSCP. ATP synthase complex consists of a soluble F(1) head domain (subunits alpha(3) and beta(3)) - the catalytic core - and a membrane F(0) domain - the membrane proton channel (subunits c, a, 8, e, f, g, k and j). These two domains are linked by a central stalk (subunits gamma, delta, and epsilon) rotating inside the F1 region and a stationary peripheral stalk (subunits F6, b, d, and OSCP). Interacts with PRICKLE3.

It localises to the mitochondrion membrane. Functionally, subunit 8, of the mitochondrial membrane ATP synthase complex (F(1)F(0) ATP synthase or Complex V) that produces ATP from ADP in the presence of a proton gradient across the membrane which is generated by electron transport complexes of the respiratory chain. ATP synthase complex consist of a soluble F(1) head domain - the catalytic core - and a membrane F(1) domain - the membrane proton channel. These two domains are linked by a central stalk rotating inside the F(1) region and a stationary peripheral stalk. During catalysis, ATP synthesis in the catalytic domain of F(1) is coupled via a rotary mechanism of the central stalk subunits to proton translocation. In vivo, can only synthesize ATP although its ATP hydrolase activity can be activated artificially in vitro. Part of the complex F(0) domain. The chain is ATP synthase F(0) complex subunit 8 from Ovis aries (Sheep).